A 941-amino-acid polypeptide reads, in one-letter code: ATP-dependent 6-phosphofructokinase subunit beta (941 aa).

An N-terminal catalytic PFK domain 1 region spans residues 2–558; sequence PDASLFNGTS…HMKNFISTNS (557 aa). ATP contacts are provided by residues Gly191, 255 to 256, and 285 to 288; these read RC and GDGS. Mg(2+) is bound at residue Asp286. Residues 331-333, Arg368, and 375-377 contribute to the beta-D-fructose 6-phosphate site; these read SID and MGR. Asp333 (proton acceptor) is an active-site residue. ATP-binding positions include Ile395, 400-405, and Gln410; that span reads KPASSR. Residues Glu432, Arg460, and 466-469 each bind beta-D-fructose 6-phosphate; that span reads HVQR. 557–558 serves as a coordination point for ATP; it reads NS. The interdomain linker stretch occupies residues 559 to 572; sequence ADHVPPSLPLEKRK. The interval 573-941 is C-terminal regulatory PFK domain 2; the sequence is KIAIINVGAP…SDMLSGRTSL (369 aa). Residues Arg643, 701 to 705, Arg739, 746 to 748, Glu806, Lys832, 838 to 841, and Arg918 contribute to the beta-D-fructose 2,6-bisphosphate site; these read TISNN, QGG, and HVQQ.

It belongs to the phosphofructokinase type A (PFKA) family. ATP-dependent PFK group I subfamily. Eukaryotic two domain clade 'E' sub-subfamily. As to quaternary structure, heterododecamer of 4 alpha, 4 beta and 4 gamma chains. Mg(2+) is required as a cofactor.

The protein localises to the cytoplasm. The enzyme catalyses beta-D-fructose 6-phosphate + ATP = beta-D-fructose 1,6-bisphosphate + ADP + H(+). Its pathway is carbohydrate degradation; glycolysis; D-glyceraldehyde 3-phosphate and glycerone phosphate from D-glucose: step 3/4. Its activity is regulated as follows. Allosterically activated by ADP, AMP, or fructose 2,6-bisphosphate, and allosterically inhibited by ATP or citrate. In terms of biological role, catalyzes the phosphorylation of D-fructose 6-phosphate to fructose 1,6-bisphosphate by ATP, the first committing step of glycolysis. The sequence is that of ATP-dependent 6-phosphofructokinase subunit beta (PFK2) from Komagataella pastoris (Yeast).